Reading from the N-terminus, the 199-residue chain is Holliday junction branch migration complex subunit RuvA (199 aa).

Residues Met-1–Leu-65 are domain I. The segment at Asp-66 to Phe-144 is domain II. The segment at Phe-144 to Ala-148 is flexible linker. Residues Gly-149–Arg-199 form a domain III region.

The protein belongs to the RuvA family. Homotetramer. Forms an RuvA(8)-RuvB(12)-Holliday junction (HJ) complex. HJ DNA is sandwiched between 2 RuvA tetramers; dsDNA enters through RuvA and exits via RuvB. An RuvB hexamer assembles on each DNA strand where it exits the tetramer. Each RuvB hexamer is contacted by two RuvA subunits (via domain III) on 2 adjacent RuvB subunits; this complex drives branch migration. In the full resolvosome a probable DNA-RuvA(4)-RuvB(12)-RuvC(2) complex forms which resolves the HJ.

It localises to the cytoplasm. The RuvA-RuvB-RuvC complex processes Holliday junction (HJ) DNA during genetic recombination and DNA repair, while the RuvA-RuvB complex plays an important role in the rescue of blocked DNA replication forks via replication fork reversal (RFR). RuvA specifically binds to HJ cruciform DNA, conferring on it an open structure. The RuvB hexamer acts as an ATP-dependent pump, pulling dsDNA into and through the RuvAB complex. HJ branch migration allows RuvC to scan DNA until it finds its consensus sequence, where it cleaves and resolves the cruciform DNA. The protein is Holliday junction branch migration complex subunit RuvA of Legionella pneumophila subsp. pneumophila (strain Philadelphia 1 / ATCC 33152 / DSM 7513).